Reading from the N-terminus, the 183-residue chain is Non-classical export protein 2 homolog (183 aa).

Topologically, residues 1-8 are cytoplasmic; it reads MVGIRQYG. The chain crosses the membrane as a helical span at residues 9-29; sequence VFTWVFRTFQLAIDTIVLALA. The Extracellular segment spans residues 30–44; sequence SALVNQQTSGGSPGK. A helical transmembrane segment spans residues 45-65; the sequence is INFSVAVGSFAILTFFLTAVG. Residues 66 to 75 are Cytoplasmic-facing; it reads RFLPTILGNP. A helical membrane pass occupies residues 76–96; the sequence is WLIAFYDFVNWVFALTGGCCI. At 97–131 the chain is on the extracellular side; sequence AVAIRVHACDNQKYLDRNHYTQGSMRRCQELKALC. A helical transmembrane segment spans residues 132-152; it reads FFLWFMFGLYVASFIVQIFIA. The Cytoplasmic portion of the chain corresponds to 153–183; the sequence is KNDTPNYTFRGRGRGKGSGPAVAPRPVMSAV. Positions 163 to 183 are disordered; it reads GRGRGKGSGPAVAPRPVMSAV.

This sequence belongs to the NCE102 family.

It is found in the cytoplasm. It localises to the golgi apparatus membrane. Its subcellular location is the cell membrane. Involved in membrane organization and might act as a sensor of sphingolipids that regulates plasma membrane function. Involved in a novel pathway of export of proteins that lack a cleavable signal sequence. In Schizosaccharomyces pombe (strain 972 / ATCC 24843) (Fission yeast), this protein is Non-classical export protein 2 homolog (fhn1).